Consider the following 802-residue polypeptide: Leucine--tRNA ligase (802 aa).

The 'HIGH' region signature appears at 40-51; that stretch reads PYPSGAGLHVGH. A 'KMSKS' region motif is present at residues 576–580; the sequence is KMSKS. An ATP-binding site is contributed by Lys-579.

It belongs to the class-I aminoacyl-tRNA synthetase family.

It localises to the cytoplasm. It catalyses the reaction tRNA(Leu) + L-leucine + ATP = L-leucyl-tRNA(Leu) + AMP + diphosphate. This Bacillus anthracis (strain A0248) protein is Leucine--tRNA ligase.